A 268-amino-acid chain; its full sequence is Aliphatic sulfonates import ATP-binding protein SsuB (268 aa).

In terms of domain architecture, ABC transporter spans 15–236; the sequence is LAVRNLQKTF…VRGSHRLAAL (222 aa). Residue 47 to 54 coordinates ATP; it reads GRSGCGKS.

Belongs to the ABC transporter superfamily. Aliphatic sulfonates importer (TC 3.A.1.17.2) family. The complex is composed of two ATP-binding proteins (SsuB), two transmembrane proteins (SsuC) and a solute-binding protein (SsuA).

Its subcellular location is the cell inner membrane. The catalysed reaction is ATP + H2O + aliphatic sulfonate-[sulfonate-binding protein]Side 1 = ADP + phosphate + aliphatic sulfonateSide 2 + [sulfonate-binding protein]Side 1.. In terms of biological role, part of the ABC transporter complex SsuABC involved in aliphatic sulfonates import. Responsible for energy coupling to the transport system. The protein is Aliphatic sulfonates import ATP-binding protein SsuB of Pseudomonas fluorescens (strain Pf0-1).